A 396-amino-acid chain; its full sequence is Proteinase-activated receptor 4 (396 aa).

Positions 1 to 16 (MCWPLLYPLVLGLSIS) are cleaved as a signal peptide. The propeptide at 17–59 (LAEGIQTPSIYDDVESTRGSHEGPLGPTVELKEPKSSDKPNPR) is removed for receptor activation. The tract at residues 28–62 (DDVESTRGSHEGPLGPTVELKEPKSSDKPNPRGYP) is disordered. Residues 46–57 (ELKEPKSSDKPN) show a composition bias toward basic and acidic residues. The Extracellular segment spans residues 60–94 (GYPGKFCANDSDTLELPASSQALLLGWVPTRLVPA). N-linked (GlcNAc...) asparagine glycosylation is present at Asn68. A helical transmembrane segment spans residues 95–115 (LYGLVVAVGLPANGLALWVLA). Residues 116–120 (TRVPR) are Cytoplasmic-facing. Residues 121 to 141 (LPSTILLMNLAVADLLLALVL) traverse the membrane as a helical segment. The Extracellular portion of the chain corresponds to 142–162 (PPRLAYHLRGQRWPFGEAACR). A disulfide bridge connects residues Cys161 and Cys240. Residues 163–183 (VATAALYGHMYGSVLLLAAVS) traverse the membrane as a helical segment. The Cytoplasmic portion of the chain corresponds to 184–203 (LDRYLALVHPLRARALRGQR). The helical transmembrane segment at 204–224 (LTTGLCLVAWLSAATLALPLT) threads the bilayer. Over 225-255 (LHRQTFRLAGSDRMLCHDALPLTEQTSHWRP) the chain is Extracellular. The helical transmembrane segment at 256–276 (AFICLAVLGCFVPLLAMGLCY) threads the bilayer. The Cytoplasmic portion of the chain corresponds to 277-295 (GATLRALAANGQRYSHALR). The chain crosses the membrane as a helical span at residues 296-316 (LTALVLFSAVASFTPSNVLLV). The Extracellular portion of the chain corresponds to 317–331 (LHYSNPSPEAWGNLY). Residues 332-355 (GAYVPSLALSTLNSCVDPFIYYYV) form a helical membrane-spanning segment. The Cytoplasmic portion of the chain corresponds to 356-396 (SHEFREKVRAMLCRQPEASSSSQASREAGSRGTAICSSTLL).

This sequence belongs to the G-protein coupled receptor 1 family. Post-translationally, a proteolytic cleavage generates a new N-terminus that functions as a tethered ligand. In terms of tissue distribution, highly expressed in the spleen. Slight expression in the heart, lung, skeletal muscle and kidney. No detectable expression in brain, liver or testis. Also detected in platelets.

The protein localises to the cell membrane. Its function is as follows. Receptor for activated thrombin or trypsin coupled to G proteins that stimulate phosphoinositide hydrolysis. May play a role in platelets activation. The polypeptide is Proteinase-activated receptor 4 (F2rl3) (Mus musculus (Mouse)).